We begin with the raw amino-acid sequence, 151 residues long: Putative calcium-binding protein CML23 (151 aa).

EF-hand domains lie at 2 to 37 (VASDEFRRVFGSFDQDGDGKISATELRLCVKASLGE), 39 to 74 (MPDEEVQALMALADTDGDGLLDEEEFVRLVTEMEAD), 84 to 119 (ETCRCLREAFAMYEMEGRGCITPLSLKLMLSKLGTH), and 120 to 151 (LDVAECQAMICRFDMNGDGVLTFDEFKTMMMA). Ca(2+) contacts are provided by Asp-15, Asp-17, Asp-19, Lys-21, Glu-26, Asp-52, Asp-54, Asp-56, and Glu-63. Positions 133, 135, 137, and 144 each coordinate Ca(2+).

Functionally, potential calcium sensor. This chain is Putative calcium-binding protein CML23 (CML23), found in Oryza sativa subsp. japonica (Rice).